The following is a 326-amino-acid chain: Protease inhibitor (326 aa).

The first 24 residues, 1–24 (MKTIRTGMMTLAALAVLGTNVVSA), serve as a signal peptide directing secretion. A run of 2 repeats spans residues 177-208 (IILH…EVEA) and 272-304 (VALI…KVFA). The tract at residues 177-304 (IILHVDKETK…DLKAEMKVFA (128 aa)) is 2 X 32 AA approximate repeats.

In terms of processing, proteolytically cleaved to yield at least three forms (BBRPI-A, -B, and -C).

The protein resides in the secreted. Its function is as follows. Shows inhibitory activity towards serine proteases, such as trypsin, chymotrypsin and subtilisin. May form a trypsin-inhibitor complex in a molar ratio of 1:1. This Brevibacillus choshinensis protein is Protease inhibitor.